Consider the following 229-residue polypeptide: MIQAIVTDIEGTTTDIRFVHQVLFPYARERLTPFLRAHQQDDDIAALLVDLRREIAQPDADIETLITVLHGFMDEDRKSTVLKAIQGIIWRTGYLQADFRGHVYPEVAQQLADWHQQGLKLYVYSSGSVAAQKLLFGYSDAGDLCPLFSGYFDTHVGAKRDVSAYQKIANQLGIAPQALLFLSDIRQELDAAQLAGWHTCQLIRDLPDNDSAHPQVNRFDQIVLSLFTE.

This sequence belongs to the HAD-like hydrolase superfamily. MasA/MtnC family. Monomer. Mg(2+) is required as a cofactor.

It carries out the reaction 5-methylsulfanyl-2,3-dioxopentyl phosphate + H2O = 1,2-dihydroxy-5-(methylsulfanyl)pent-1-en-3-one + phosphate. It participates in amino-acid biosynthesis; L-methionine biosynthesis via salvage pathway; L-methionine from S-methyl-5-thio-alpha-D-ribose 1-phosphate: step 3/6. Its pathway is amino-acid biosynthesis; L-methionine biosynthesis via salvage pathway; L-methionine from S-methyl-5-thio-alpha-D-ribose 1-phosphate: step 4/6. Functionally, bifunctional enzyme that catalyzes the enolization of 2,3-diketo-5-methylthiopentyl-1-phosphate (DK-MTP-1-P) into the intermediate 2-hydroxy-3-keto-5-methylthiopentenyl-1-phosphate (HK-MTPenyl-1-P), which is then dephosphorylated to form the acireductone 1,2-dihydroxy-3-keto-5-methylthiopentene (DHK-MTPene). The sequence is that of Enolase-phosphatase E1 from Yersinia pestis (strain Pestoides F).